Consider the following 265-residue polypeptide: tRNA pseudouridine synthase A (265 aa).

Catalysis depends on Asp-58, which acts as the Nucleophile. Substrate is bound at residue Tyr-116.

Belongs to the tRNA pseudouridine synthase TruA family. In terms of assembly, homodimer.

The enzyme catalyses uridine(38/39/40) in tRNA = pseudouridine(38/39/40) in tRNA. Formation of pseudouridine at positions 38, 39 and 40 in the anticodon stem and loop of transfer RNAs. The sequence is that of tRNA pseudouridine synthase A from Neisseria gonorrhoeae (strain NCCP11945).